A 249-amino-acid chain; its full sequence is Putative TrmH family tRNA/rRNA methyltransferase YacO (249 aa).

3 residues coordinate S-adenosyl-L-methionine: glycine 198, leucine 218, and leucine 227.

The protein belongs to the class IV-like SAM-binding methyltransferase superfamily. RNA methyltransferase TrmH family.

The protein is Putative TrmH family tRNA/rRNA methyltransferase YacO (yacO) of Bacillus subtilis (strain 168).